A 255-amino-acid chain; its full sequence is PABIR family member 2 (255 aa).

The interval 1–24 (MAQEKMDLDFEADTSEGATLRRSN) is disordered. N-acetylalanine is present on Ala2. Phosphoserine is present on residues Ser25, Ser33, Ser50, and Ser58. Thr112 is subject to Phosphothreonine. Phosphoserine is present on residues Ser115 and Ser119. An Omega-N-methylarginine modification is found at Arg122. At Ser145 the chain carries Phosphoserine. Disordered stretches follow at residues 169–196 (LGPLKRKGEMEMESQPKRPFQGTTSMLS) and 219–238 (SGLSSDSLATGSAPAESPVA). Residues 174-184 (RKGEMEMESQP) show a composition bias toward basic and acidic residues.

Belongs to the FAM122 family.

This chain is PABIR family member 2, found in Mus musculus (Mouse).